A 316-amino-acid polypeptide reads, in one-letter code: Retinol dehydrogenase 12 (316 aa).

Position 46–52 (46–52) interacts with NADP(+); the sequence is GANTGIG. S175 provides a ligand contact to substrate. Y200 (proton acceptor) is an active-site residue.

The protein belongs to the short-chain dehydrogenases/reductases (SDR) family. In terms of tissue distribution, expressed in the retina.

The enzyme catalyses all-trans-retinol + NADP(+) = all-trans-retinal + NADPH + H(+). It carries out the reaction 11-cis-retinol + NADP(+) = 11-cis-retinal + NADPH + H(+). It catalyses the reaction 9-cis-retinol + NADP(+) = 9-cis-retinal + NADPH + H(+). The catalysed reaction is a 4-hydroxynonen-1-ol + NADP(+) = a 4-hydroxynonenal + NADPH + H(+). The enzyme catalyses (E)-non-2-en-1-ol + NADP(+) = (E)-non-2-enal + NADPH + H(+). It carries out the reaction (Z)-non-6-en-1-ol + NADP(+) = (Z)-non-6-enal + NADPH + H(+). It catalyses the reaction nonan-1-ol + NADP(+) = nonanal + NADPH + H(+). Its pathway is cofactor metabolism; retinol metabolism. Retinoids dehydrogenase/reductase with a clear preference for NADP. Displays high activity towards 9-cis, 11-cis and all-trans-retinal. Shows very weak activity towards 13-cis-retinol. Also exhibits activity, albeit with lower affinity than for retinaldehydes, towards lipid peroxidation products (C9 aldehydes) such as 4-hydroxynonenal and trans-2-nonenal. May play an important function in photoreceptor cells to detoxify 4-hydroxynonenal and potentially other toxic aldehyde products resulting from lipid peroxidation. Has no dehydrogenase activity towards steroids. This is Retinol dehydrogenase 12 (RDH12) from Bos taurus (Bovine).